The primary structure comprises 452 residues: MNFSAVILAAGKGTRMYSNKPKVLHTLAGKPMAKHVIDTCEGLGAQNIHLVYGHGGDQMKAELGEERVQWVLQAEQLGTGHAVNQAAPEFADDEKVLVLYGDVPLISAETVENLLDAQPTGGIALLTVVLDNPMGYGRIIRRNGPVIAIVEQKDATEEQKLIKEINTGVMVATGGDLKRWLAALKNENAQGEYYLTDIIAAAHDEGRAVEAVHPVSPIEVEGVNDRAQLARLERAYQAAQAQKLLEQGVMLRDPSRFDLRGTLQCGMDIEIDANVIIEGNVTLGDNVIIGAGCVLKDCEIDDNTVIRPYSVIEGATVGEECTVGPFTRLRPGAELCNDAHVGNFVEVKNVRLGEGSKANHLTYLGDAEIGKRVNVGAGVITCNYDGANKFKTIIGDDVFVGSDSQLIAPVTVANGATVGAGSTVTKDVNENELYISRAKERRIANWQRPTKK.

Residues 1–226 (MNFSAVILAA…PIEVEGVNDR (226 aa)) are pyrophosphorylase. Residues 8 to 11 (LAAG), Lys-22, Gln-73, 78 to 79 (GT), 100 to 102 (YGD), Gly-137, Glu-151, Asn-166, and Asn-224 each bind UDP-N-acetyl-alpha-D-glucosamine. A Mg(2+)-binding site is contributed by Asp-102. Asn-224 provides a ligand contact to Mg(2+). The tract at residues 227-247 (AQLARLERAYQAAQAQKLLEQ) is linker. Positions 248–452 (GVMLRDPSRF…IANWQRPTKK (205 aa)) are N-acetyltransferase. UDP-N-acetyl-alpha-D-glucosamine-binding residues include Arg-330 and Lys-348. The active-site Proton acceptor is His-360. The UDP-N-acetyl-alpha-D-glucosamine site is built by Tyr-363 and Asn-374. Residues Ala-377, 383 to 384 (NY), Ser-402, Ala-420, and Arg-437 each bind acetyl-CoA.

It in the N-terminal section; belongs to the N-acetylglucosamine-1-phosphate uridyltransferase family. In the C-terminal section; belongs to the transferase hexapeptide repeat family. In terms of assembly, homotrimer. Mg(2+) is required as a cofactor.

The protein localises to the cytoplasm. The catalysed reaction is alpha-D-glucosamine 1-phosphate + acetyl-CoA = N-acetyl-alpha-D-glucosamine 1-phosphate + CoA + H(+). It catalyses the reaction N-acetyl-alpha-D-glucosamine 1-phosphate + UTP + H(+) = UDP-N-acetyl-alpha-D-glucosamine + diphosphate. It participates in nucleotide-sugar biosynthesis; UDP-N-acetyl-alpha-D-glucosamine biosynthesis; N-acetyl-alpha-D-glucosamine 1-phosphate from alpha-D-glucosamine 6-phosphate (route II): step 2/2. The protein operates within nucleotide-sugar biosynthesis; UDP-N-acetyl-alpha-D-glucosamine biosynthesis; UDP-N-acetyl-alpha-D-glucosamine from N-acetyl-alpha-D-glucosamine 1-phosphate: step 1/1. Its pathway is bacterial outer membrane biogenesis; LPS lipid A biosynthesis. Catalyzes the last two sequential reactions in the de novo biosynthetic pathway for UDP-N-acetylglucosamine (UDP-GlcNAc). The C-terminal domain catalyzes the transfer of acetyl group from acetyl coenzyme A to glucosamine-1-phosphate (GlcN-1-P) to produce N-acetylglucosamine-1-phosphate (GlcNAc-1-P), which is converted into UDP-GlcNAc by the transfer of uridine 5-monophosphate (from uridine 5-triphosphate), a reaction catalyzed by the N-terminal domain. In Aliivibrio fischeri (strain ATCC 700601 / ES114) (Vibrio fischeri), this protein is Bifunctional protein GlmU.